The sequence spans 660 residues: Glutenin, high molecular weight subunit 12 (660 aa).

Residues 1 to 21 form the signal peptide; that stretch reads MAKRLVLFAAVVIALVALTTA. A compositionally biased stretch (polar residues) spans 127-136; it reads YYPSVTSPRQ. Residues 127 to 660 form a disordered region; that stretch reads YYPSVTSPRQ…EGGDALSASQ (534 aa). Composition is skewed to low complexity over residues 141–166, 187–200, 208–248, and 255–275; these read PGQA…QGQQ, QGYY…PGQG, QGYY…WQQG, and QQLG…GQQG. Residues 276 to 286 show a composition bias toward polar residues; it reads HYPTSLQQPGQ. Residues 296–365 show a composition bias toward low complexity; it reads QQQPAQGQQG…QQQPGQGQQG (70 aa). Residues 370 to 384 show a composition bias toward polar residues; it reads SLQQPGQQGHYPTSL. 4 stretches are compositionally biased toward low complexity: residues 385–426, 478–514, 522–535, and 551–577; these read QQLG…GQQG, PGQR…PGQG, QGYY…PGQG, and QQTG…GQQG. The span at 590-604 shows a compositional bias: gly residues; that stretch reads QQSGQGQQSGQGHQP.

The protein belongs to the gliadin/glutenin family. In terms of assembly, disulfide-bridge linked aggregates.

Its function is as follows. Glutenins are high-molecular weight seed storage proteins of wheat endosperm. Thought to be responsible for the visco-elastic property of wheat dough. The polypeptide is Glutenin, high molecular weight subunit 12 (Triticum aestivum (Wheat)).